We begin with the raw amino-acid sequence, 185 residues long: Threonylcarbamoyl-AMP synthase (185 aa).

The YrdC-like domain maps to 4–185 (SWRVQQAAQN…IATGQVMRAG (182 aa)).

This sequence belongs to the SUA5 family. TsaC subfamily.

The protein resides in the cytoplasm. It catalyses the reaction L-threonine + hydrogencarbonate + ATP = L-threonylcarbamoyladenylate + diphosphate + H2O. Functionally, required for the formation of a threonylcarbamoyl group on adenosine at position 37 (t(6)A37) in tRNAs that read codons beginning with adenine. Catalyzes the conversion of L-threonine, HCO(3)(-)/CO(2) and ATP to give threonylcarbamoyl-AMP (TC-AMP) as the acyladenylate intermediate, with the release of diphosphate. The protein is Threonylcarbamoyl-AMP synthase of Pseudomonas syringae pv. tomato (strain ATCC BAA-871 / DC3000).